Here is a 385-residue protein sequence, read N- to C-terminus: Chaperone protein DnaJ (385 aa).

The 68-residue stretch at 5–72 (DYYEVLGVGK…QKRAAYDQFG (68 aa)) folds into the J domain. A disordered region spans residues 26–48 (RKLAMKHHPDRNQGDGAKASEEK). Basic and acidic residues predominate over residues 35 to 48 (DRNQGDGAKASEEK). A CR-type zinc finger spans residues 145–223 (GKESQIRIPT…CNGAGKVKKQ (79 aa)). Zn(2+) is bound by residues cysteine 158, cysteine 161, cysteine 175, cysteine 178, cysteine 197, cysteine 200, cysteine 211, and cysteine 214. CXXCXGXG motif repeat units lie at residues 158-165 (CDTCHGSG), 175-182 (CTTCHGAG), 197-204 (CPHCHGSG), and 211-218 (CTSCNGAG). Positions 362-385 (FRKGGDKHSPTSKSWTDRVKDLFK) are disordered.

Belongs to the DnaJ family. As to quaternary structure, homodimer. Zn(2+) is required as a cofactor.

It localises to the cytoplasm. Its function is as follows. Participates actively in the response to hyperosmotic and heat shock by preventing the aggregation of stress-denatured proteins and by disaggregating proteins, also in an autonomous, DnaK-independent fashion. Unfolded proteins bind initially to DnaJ; upon interaction with the DnaJ-bound protein, DnaK hydrolyzes its bound ATP, resulting in the formation of a stable complex. GrpE releases ADP from DnaK; ATP binding to DnaK triggers the release of the substrate protein, thus completing the reaction cycle. Several rounds of ATP-dependent interactions between DnaJ, DnaK and GrpE are required for fully efficient folding. Also involved, together with DnaK and GrpE, in the DNA replication of plasmids through activation of initiation proteins. The chain is Chaperone protein DnaJ from Leptothrix cholodnii (strain ATCC 51168 / LMG 8142 / SP-6) (Leptothrix discophora (strain SP-6)).